The following is a 186-amino-acid chain: Peptidyl-tRNA hydrolase (186 aa).

Tyrosine 17 is a binding site for tRNA. Histidine 22 functions as the Proton acceptor in the catalytic mechanism. Residues tyrosine 64 and asparagine 66 each coordinate tRNA.

The protein belongs to the PTH family. In terms of assembly, monomer.

Its subcellular location is the cytoplasm. The enzyme catalyses an N-acyl-L-alpha-aminoacyl-tRNA + H2O = an N-acyl-L-amino acid + a tRNA + H(+). In terms of biological role, hydrolyzes ribosome-free peptidyl-tRNAs (with 1 or more amino acids incorporated), which drop off the ribosome during protein synthesis, or as a result of ribosome stalling. Its function is as follows. Catalyzes the release of premature peptidyl moieties from peptidyl-tRNA molecules trapped in stalled 50S ribosomal subunits, and thus maintains levels of free tRNAs and 50S ribosomes. This Methylacidiphilum infernorum (isolate V4) (Methylokorus infernorum (strain V4)) protein is Peptidyl-tRNA hydrolase.